Here is a 430-residue protein sequence, read N- to C-terminus: von Willebrand factor (430 aa).

N-linked (GlcNAc...) asparagine glycosylation is present at Asn6. Cys9 and Cys12 are disulfide-bonded. 3 O-linked (GalNAc...) threonine glycosylation sites follow: Thr23, Thr30, and Thr31. A disulfide bridge links Cys47 with Cys233. The 177-residue stretch at 52 to 228 (DLVFLLDGSY…DELEQRRDEI (177 aa)) folds into the VWFA 1; binding site for platelet glycoprotein Ib domain. A glycan (O-linked (GalNAc...) threonine) is linked at Thr252. Ser261 carries an O-linked (GalNAc...) serine glycan. Residues 273-430 (DVVFVLEASD…ITPIFIQDFE (158 aa)) enclose the VWFA 2 domain. Asn290 and Asn349 each carry an N-linked (GlcNAc...) asparagine glycan.

Multimeric. Interacts with F8. N- and O-glycosylated. Plasma.

Its subcellular location is the secreted. The protein localises to the extracellular space. The protein resides in the extracellular matrix. Functionally, important in the maintenance of hemostasis, it promotes adhesion of platelets to the sites of vascular injury by forming a molecular bridge between sub-endothelial collagen matrix and platelet-surface receptor complex GPIb-IX-V. Also acts as a chaperone for coagulation factor VIII, delivering it to the site of injury, stabilizing its heterodimeric structure and protecting it from premature clearance from plasma. The chain is von Willebrand factor from Rattus norvegicus (Rat).